The chain runs to 1077 residues: Hemoglobin and hemoglobin-haptoglobin-binding protein A (1077 aa).

An N-terminal signal peptide occupies residues 1–24 (MTNFRLNVLAYSVMLGLTASVAYA). Residues 25–72 (EPTNQPTNQPTNQPTNQPTNQPTNQPTNQPTNQPTNQPTNQPTNQNSN) form a disordered region. A run of 11 repeats spans residues 26 to 29 (PTNQ), 30 to 33 (PTNQ), 34 to 37 (PTNQ), 38 to 41 (PTNQ), 42 to 45 (PTNQ), 46 to 49 (PTNQ), 50 to 53 (PTNQ), 54 to 57 (PTNQ), 58 to 61 (PTNQ), 62 to 65 (PTNQ), and 66 to 69 (PTNQ). The interval 26–69 (PTNQPTNQPTNQPTNQPTNQPTNQPTNQPTNQPTNQPTNQPTNQ) is 11 X 4 AA tandem repeats of P-T-N-Q. Positions 26–70 (PTNQPTNQPTNQPTNQPTNQPTNQPTNQPTNQPTNQPTNQPTNQN) are enriched in low complexity. Residues 78 to 85 (EQINVSGS) carry the TonB box motif. A TBDR plug domain is found at 89 to 216 (TDTKAPPKIA…LGGSVSLDTK (128 aa)). In terms of domain architecture, TBDR beta-barrel spans 224-1077 (NKNYYASYKR…NYRMSVQFEF (854 aa)). The TonB C-terminal box signature appears at 1060-1077 (NRFYAPERNYRMSVQFEF).

The protein belongs to the TonB-dependent receptor family. Hemoglobin/haptoglobin binding protein subfamily.

Its subcellular location is the cell outer membrane. Its function is as follows. Acts as a receptor for hemoglobin or the hemoglobin/haptoglobin complex of the human host and is required for heme uptake. This Haemophilus influenzae protein is Hemoglobin and hemoglobin-haptoglobin-binding protein A (hgpA).